The sequence spans 702 residues: Ribosomal RNA large subunit methyltransferase K/L (702 aa).

Residues 43–154 (LVYQSLMWSR…KETASIALDL (112 aa)) enclose the THUMP domain.

The protein belongs to the methyltransferase superfamily. RlmKL family.

Its subcellular location is the cytoplasm. It carries out the reaction guanosine(2445) in 23S rRNA + S-adenosyl-L-methionine = N(2)-methylguanosine(2445) in 23S rRNA + S-adenosyl-L-homocysteine + H(+). The catalysed reaction is guanosine(2069) in 23S rRNA + S-adenosyl-L-methionine = N(2)-methylguanosine(2069) in 23S rRNA + S-adenosyl-L-homocysteine + H(+). In terms of biological role, specifically methylates the guanine in position 2445 (m2G2445) and the guanine in position 2069 (m7G2069) of 23S rRNA. This is Ribosomal RNA large subunit methyltransferase K/L from Shigella boydii serotype 4 (strain Sb227).